We begin with the raw amino-acid sequence, 346 residues long: fMet-Leu-Phe receptor (346 aa).

N-linked (GlcNAc...) asparagine glycans are attached at residues N1 and N7. Over 1–24 (NSSLPTNISGGTPAVSAGYLFLDI) the chain is Extracellular. The chain crosses the membrane as a helical span at residues 25-47 (VTYLVFAVTFVLGVLGNGLVIWV). The Cytoplasmic portion of the chain corresponds to 48 to 58 (AGFRMTHTVTT). The helical transmembrane segment at 59-80 (ISYLNLAVADFCFTSTLPFFMV) threads the bilayer. Residues 81–97 (KKAMGGHWPFGWFLCKF) are Extracellular-facing. Cysteines 95 and 173 form a disulfide. The chain crosses the membrane as a helical span at residues 98–118 (IFTIVDINLFGSVFLIALIAL). The Cytoplasmic portion of the chain corresponds to 119–137 (DRCVCVLHPVWTQNHRTVS). The chain crosses the membrane as a helical span at residues 138-159 (LAKKVIIGPWVMALLLTLPVII). The Extracellular segment spans residues 160 to 202 (RVTTVPGKMGTVACTFNFSPWTNDPKERIKVAVAMLTVRGIIR). The chain crosses the membrane as a helical span at residues 203–223 (FIIGFSAPMSIVAVSYGLIAT). Topologically, residues 224 to 239 (KIDKQGLIKSSRTLRV) are cytoplasmic. The chain crosses the membrane as a helical span at residues 240–263 (LSFVAAAFFLSWSPYQVVALIATV). Residues 264–282 (RIRELLQGMYKEIGIAVDV) are Extracellular-facing. A helical transmembrane segment spans residues 283-302 (TSALAFFNSCLNPMLYVFMG). Over 303-346 (QDFRERLIHALPASLERALTEDSTQTSDTATNSTLPSAEVALQA) the chain is Cytoplasmic. Residues 322-346 (TEDSTQTSDTATNSTLPSAEVALQA) form a disordered region. A compositionally biased stretch (polar residues) spans 323–338 (EDSTQTSDTATNSTLP).

The protein belongs to the G-protein coupled receptor 1 family. Phosphorylated; which is necessary for desensitization.

The protein localises to the cell membrane. In terms of biological role, high affinity receptor for N-formyl-methionyl peptides (fMLP), which are powerful neutrophil chemotactic factors. Binding of fMLP to the receptor stimulates intracellular calcium mobilization and superoxide anion release. This response is mediated via a G-protein that activates a phosphatidylinositol-calcium second messenger system. Receptor for TAFA4, mediates its effects on chemoattracting macrophages, promoting phagocytosis and increasing ROS release. Receptor for cathepsin CTSG, leading to increased phagocyte chemotaxis. The polypeptide is fMet-Leu-Phe receptor (FPR1) (Gorilla gorilla gorilla (Western lowland gorilla)).